Consider the following 200-residue polypeptide: Prophage tail fiber assembly protein homolog TfaE (200 aa).

Belongs to the tfa family.

The sequence is that of Prophage tail fiber assembly protein homolog TfaE (tfaE) from Escherichia coli (strain K12).